Reading from the N-terminus, the 68-residue chain is Large ribosomal subunit protein bL32 (68 aa).

The protein belongs to the bacterial ribosomal protein bL32 family.

This Onion yellows phytoplasma (strain OY-M) protein is Large ribosomal subunit protein bL32.